Here is a 127-residue protein sequence, read N- to C-terminus: uncharacterized protein (127 aa).

Positions 1-26 (MKAIYALLAVVALALVAVSLFSQSDS) are cleaved as a signal peptide.

This is an uncharacterized protein from Archaeoglobus fulgidus (strain ATCC 49558 / DSM 4304 / JCM 9628 / NBRC 100126 / VC-16).